A 320-amino-acid chain; its full sequence is UDP-N-acetylenolpyruvoylglucosamine reductase (320 aa).

Positions 35-216 constitute an FAD-binding PCMH-type domain; that stretch reads RAGGPAQVLF…KQAMDEVQHH (182 aa). The active site involves R181. S230 serves as the catalytic Proton donor. E300 is an active-site residue.

Belongs to the MurB family. FAD is required as a cofactor.

It localises to the cytoplasm. The catalysed reaction is UDP-N-acetyl-alpha-D-muramate + NADP(+) = UDP-N-acetyl-3-O-(1-carboxyvinyl)-alpha-D-glucosamine + NADPH + H(+). It functions in the pathway cell wall biogenesis; peptidoglycan biosynthesis. In terms of biological role, cell wall formation. The sequence is that of UDP-N-acetylenolpyruvoylglucosamine reductase from Brucella anthropi (strain ATCC 49188 / DSM 6882 / CCUG 24695 / JCM 21032 / LMG 3331 / NBRC 15819 / NCTC 12168 / Alc 37) (Ochrobactrum anthropi).